Here is a 155-residue protein sequence, read N- to C-terminus: uncharacterized protein (155 aa).

5 consecutive transmembrane segments (helical) span residues 4–24, 46–66, 77–97, 101–121, and 130–150; these read IVGA…AGYL, AIGI…AIVY, FWFT…FQFT, LLAA…LLII, and SYLL…SFTI.

It belongs to the TspO/BZRP family.

It localises to the cell membrane. This is an uncharacterized protein from Bacillus subtilis (strain 168).